We begin with the raw amino-acid sequence, 857 residues long: MAFPAPAFSLANLLNGSYGVDTPEDVERLRSEQREEAAAACRNYRPLSAVDVSESVTEDAHSLQTPDGAPAEAVSDEFVTYGAEDYLEKSDDELLVAFETMVKPMRIGQLWCPAFNKCSFISSIAMARALLLAPRTSHRTMKCFEDLVAAIYTKSDFYYSEECEADDVQMDISSRDVPGYSFEPWSRTSGFEPPPICEACDMIMYQCPCFDFNALKKSCAERTFADDYVIEGLDGVVDNATLLSNLGPFLVPVKCQYEKCPTPPIAIPPNLNRATDRVDINLVQSICDSTLPTHSNYDDSFHQVFVESADYSIDLDHVRLRQSDLIAKIPDSGHMIPVLNTGSGHKRVGTTKEVLTAIKKRNADVPELGDSVNLSRLSKAVAERFFISYINGNSLASSNFVNVVSNFHDYMEKWKSSGLSYDDLPDLHAENLQFYDHMIKSDVKPVVSDTLNIDRPIPATITYHKKSITSQFSPLFTALFERFQRCLRERIILPVGKISSLEMAGFDVKNKYCLEIDLSKFDKSQGEFHLLIQEHILNGLGCPAPITKWWCDFHRFSYIRDRRAGVGMPISFQRRTGDAFTYFGNTIVTMAEFAWCYDTDQFEKLLFSGDDSLGFSLLPPVGDSSKFTTLYNMEAKVMEPSVPYICSKFLLSDEFGNTFSVPDPLREVQRLGTKKIPYSDNDEFLFAHFMSFVDRLKFLDRMSQSCIDQLSIFFELKYKKSGEEAALMLGAFKKYTANFQSYKELYYSDRHQCELINSFCSTEFRVERVNSNKQRKKYGIERRCDDKRRTPTGSYGGGEEAETKVSQTKSTGTRSQKSQRESAFESQTVPLPTVLSSGWSGTDRVVPPCERGGVTRA.

The region spanning 511 to 624 is the RdRp catalytic domain; it reads KYCLEIDLSK…FSLLPPVGDS (114 aa). The span at 780–789 shows a compositional bias: basic and acidic residues; the sequence is IERRCDDKRR. Residues 780-857 form a disordered region; sequence IERRCDDKRR…PCERGGVTRA (78 aa). Polar residues-rich tracts occupy residues 804 to 816 and 824 to 840; these read KVSQTKSTGTRSQ and FESQTVPLPTVLSSGWS.

This sequence belongs to the ssRNA positive-strand viruses RNA-directed RNA polymerase family. Interacts with replication protein 1a.

The enzyme catalyses RNA(n) + a ribonucleoside 5'-triphosphate = RNA(n+1) + diphosphate. Functionally, RNA-dependent RNA polymerase which replicates the viral genome composed of 3 RNA segments, RNA1, RNA2 and RNA3. The protein is RNA-directed RNA polymerase 2a of Cucumber mosaic virus (strain MB-8) (CMV).